The primary structure comprises 692 residues: Non-hemolytic phospholipase C (692 aa).

The tat-type signal signal peptide spans 1–35; sequence MISKSRRSFIRLAAGTVGATVATSMLPSSIQAALA.

The protein belongs to the bacterial phospholipase C family. Post-translationally, predicted to be exported by the Tat system. The position of the signal peptide cleavage has not been experimentally proven.

The catalysed reaction is a 1,2-diacyl-sn-glycero-3-phosphocholine + H2O = phosphocholine + a 1,2-diacyl-sn-glycerol + H(+). Functionally, hydrolyzes phosphatidylserine as well as phosphatidylcholine. The chain is Non-hemolytic phospholipase C (plcN) from Pseudomonas aeruginosa (strain ATCC 15692 / DSM 22644 / CIP 104116 / JCM 14847 / LMG 12228 / 1C / PRS 101 / PAO1).